The primary structure comprises 224 residues: 7-cyano-7-deazaguanine synthase (224 aa).

ATP is bound at residue 10-20 (LSGGLDSATVV). Positions 189, 199, 202, and 205 each coordinate Zn(2+).

It belongs to the QueC family. Zn(2+) is required as a cofactor.

The catalysed reaction is 7-carboxy-7-deazaguanine + NH4(+) + ATP = 7-cyano-7-deazaguanine + ADP + phosphate + H2O + H(+). It participates in purine metabolism; 7-cyano-7-deazaguanine biosynthesis. Its function is as follows. Catalyzes the ATP-dependent conversion of 7-carboxy-7-deazaguanine (CDG) to 7-cyano-7-deazaguanine (preQ(0)). This Pseudomonas putida (strain W619) protein is 7-cyano-7-deazaguanine synthase.